The primary structure comprises 155 residues: MADQNERAFQKQFGVNLNRKVKPGVTKKKILRRYRDVGLGFKTPREAIDGTYIDKKCPWTGDVRIRGRILIGVVRKTKMQRTIVIRRDYLHFVRKYSRFEKRHRNMSVHCSPAFRDVEHGDIVTIGECRPLSKTVRFNVLKVNKGQGAKKSFKKF.

The residue at position 2 (A2) is an N-acetylalanine.

This sequence belongs to the universal ribosomal protein uS17 family.

This Drosophila pseudoobscura pseudoobscura (Fruit fly) protein is Small ribosomal subunit protein uS17.